We begin with the raw amino-acid sequence, 69 residues long: Large ribosomal subunit protein uL29 (69 aa).

Belongs to the universal ribosomal protein uL29 family.

The chain is Large ribosomal subunit protein uL29 from Synechococcus sp. (strain CC9902).